The chain runs to 179 residues: Large ribosomal subunit protein uL10 (179 aa).

The protein belongs to the universal ribosomal protein uL10 family. In terms of assembly, part of the ribosomal stalk of the 50S ribosomal subunit. The N-terminus interacts with L11 and the large rRNA to form the base of the stalk. The C-terminus forms an elongated spine to which L12 dimers bind in a sequential fashion forming a multimeric L10(L12)X complex.

In terms of biological role, forms part of the ribosomal stalk, playing a central role in the interaction of the ribosome with GTP-bound translation factors. The chain is Large ribosomal subunit protein uL10 from Thermotoga petrophila (strain ATCC BAA-488 / DSM 13995 / JCM 10881 / RKU-1).